A 660-amino-acid polypeptide reads, in one-letter code: MSKIIELPEILANQIAAGEVIERPASVVKELVENAIDANSRQITIEIEESGLKSIKITDNGEGMSEENLPLSILRHATSKIKNQSDLFRIRTLGFRGEALPSIASISELRIETSTADSPYGSLLVAKGGQIERQEVISTPVGTKITVENLFYNTPARLKYMKSLQSELAHIVDVVNRLSLGHPEVSFTLICDGREMTKTSGTGDLKQAIAGIYGLNTAKKMIEISNADLDFEVSGYVSLPELTRANRNYITILINGRYIKNFLLNRAILDGYGSKLMVGRFPIVVIDIQIDPYLADVNVHPTKQEVRISKEKELMALISTAIAESLKSQDLIPDALENLAKSTVRSSTKYEQTKLPLQSSKLYFDPQKNDFYIKEPQKTTELTVSEESPNFTLYTNIDNTVKEDRNLDQTSASASVKHASRSQDENQLSEHPNLDFTNKQKMEQLISKLENEKTSTFPELDFFGQMHGTYLFAQGKDGLFIIDQHAAQERVKYEYYRDKIGKVDTSLQQLLVPYLFEFSGADFIQLQEKMSFLNEVGIFLEPYGMNTFILREHPIWMKESEIESGVYEMCDMLLLTNQVSIKTYRAELAIMMSCKRSIKANHALDDYSARHLLEQLSQCQNPYNCPHGRPVLVHFTKADMEKMFRRIQENHTSLRDLGKY.

Residues 408–436 (DQTSASASVKHASRSQDENQLSEHPNLDF) are disordered. Polar residues predominate over residues 425–436 (ENQLSEHPNLDF).

The protein belongs to the DNA mismatch repair MutL/HexB family.

Its function is as follows. This protein is involved in the repair of mismatches in DNA. It is required for dam-dependent methyl-directed DNA mismatch repair. May act as a 'molecular matchmaker', a protein that promotes the formation of a stable complex between two or more DNA-binding proteins in an ATP-dependent manner without itself being part of a final effector complex. The polypeptide is DNA mismatch repair protein MutL (Streptococcus uberis (strain ATCC BAA-854 / 0140J)).